The chain runs to 682 residues: Potassium-transporting ATPase ATP-binding subunit (682 aa).

A run of 4 helical transmembrane segments spans residues 34–54, 58–78, 219–239, and 254–274; these read PVMF…LAMV, IAGS…TVLF, IALT…TATL, and VLVA…LSAI. Aspartate 307 acts as the 4-aspartylphosphate intermediate in catalysis. Residues aspartate 344, glutamate 348, 377–384, and lysine 395 each bind ATP; that span reads FTAQSRMS. Residues aspartate 518 and aspartate 522 each contribute to the Mg(2+) site. The next 3 membrane-spanning stretches (helical) occupy residues 588–608, 616–636, and 662–682; these read FAII…LNVM, AILS…PLAL, and LLVP…LGLA.

This sequence belongs to the cation transport ATPase (P-type) (TC 3.A.3) family. Type IA subfamily. As to quaternary structure, the system is composed of three essential subunits: KdpA, KdpB and KdpC.

Its subcellular location is the cell inner membrane. It catalyses the reaction K(+)(out) + ATP + H2O = K(+)(in) + ADP + phosphate + H(+). In terms of biological role, part of the high-affinity ATP-driven potassium transport (or Kdp) system, which catalyzes the hydrolysis of ATP coupled with the electrogenic transport of potassium into the cytoplasm. This subunit is responsible for energy coupling to the transport system and for the release of the potassium ions to the cytoplasm. This is Potassium-transporting ATPase ATP-binding subunit from Salmonella dublin (strain CT_02021853).